A 743-amino-acid polypeptide reads, in one-letter code: Myb-related protein B (743 aa).

The disordered stretch occupies residues 1–29 (MSRRSRGDDLEDLQYQDTDSDVPEPKENR). Residues 9-22 (DLEDLQYQDTDSDV) show a composition bias toward acidic residues. HTH myb-type domains lie at 26-77 (KENR…LRVL), 78-133 (HPDL…NPEV), and 134-184 (KKSS…KRKV). 3 DNA-binding regions (H-T-H motif) span residues 54–77 (WKTIASNLNNRTEQQCQHRWLRVL), 106–129 (WTLIAKQLRGRMGKQCRERWHNHL), and 157–180 (WAEIAKLLPGRTDNAVKNHWNSTI). Disordered stretches follow at residues 221-262 (VERS…SESA) and 381-406 (VTENGGSITTSVTEANSMTPKSTPVK).

Component of the DREAM complex.

The protein localises to the nucleus. In Xenopus laevis (African clawed frog), this protein is Myb-related protein B (mybl2).